Reading from the N-terminus, the 310-residue chain is Protease HtpX homolog (310 aa).

Transmembrane regions (helical) follow at residues 16–36 (NAVLATYCVIFAFIGLLVDVI) and 55–75 (IFPTITIIMFLVAFVIIVVCI). Residue H166 coordinates Zn(2+). E167 is an active-site residue. Residue H170 coordinates Zn(2+). 2 helical membrane passes run 182–202 (VGILSNIMLLVANFSVYFFMG) and 214–234 (MILLVLQIILPFLTLLLQMYL). E239 contributes to the Zn(2+) binding site.

It belongs to the peptidase M48B family. Requires Zn(2+) as cofactor.

It is found in the cell inner membrane. In Helicobacter pylori (strain Shi470), this protein is Protease HtpX homolog.